The sequence spans 103 residues: uncharacterized protein (103 aa).

The next 3 helical transmembrane spans lie at 12-34, 49-66, and 79-101; these read GFSWGIALFCLPILLWPLALTIS, TLMSVFLWAYPFGLALIA, and FARGLLGLSAVAFYGMLFYVAGG.

The protein resides in the cell membrane. This is an uncharacterized protein from Pasteurella multocida (strain Pm70).